The chain runs to 361 residues: ATP phosphoribosyltransferase regulatory subunit (361 aa).

It belongs to the class-II aminoacyl-tRNA synthetase family. HisZ subfamily. In terms of assembly, heteromultimer composed of HisG and HisZ subunits.

It is found in the cytoplasm. It participates in amino-acid biosynthesis; L-histidine biosynthesis; L-histidine from 5-phospho-alpha-D-ribose 1-diphosphate: step 1/9. Required for the first step of histidine biosynthesis. May allow the feedback regulation of ATP phosphoribosyltransferase activity by histidine. The polypeptide is ATP phosphoribosyltransferase regulatory subunit (Thermus thermophilus (strain ATCC 27634 / DSM 579 / HB8)).